The chain runs to 422 residues: Cytochrome P-450 monooxygenase DoxA (422 aa).

Cysteine 369 lines the heme pocket.

It belongs to the cytochrome P450 family. As to quaternary structure, monomer. The cofactor is heme.

It is found in the cytoplasm. The enzyme catalyses 13-deoxydaunorubicin + NADPH + O2 + H(+) = 13-dihydrodaunorubicin + NADP(+) + H2O. The catalysed reaction is 13-dihydrodaunorubicin + NADPH + O2 + H(+) = daunorubicin + NADP(+) + 2 H2O. It catalyses the reaction 13-deoxycarminomycin + NADPH + O2 + H(+) = 13-dihydrocarminomycin + NADP(+) + H2O. It carries out the reaction 13-dihydrocarminomycin + NADPH + O2 + H(+) = carminomycin + NADP(+) + 2 H2O. The protein operates within antibiotic biosynthesis; daunorubicin biosynthesis. It functions in the pathway antibiotic biosynthesis; carminomycin biosynthesis. With respect to regulation, strongly inhibited by dithiothreitol and high ionic strength buffers. In terms of biological role, involved in the biosynthesis of the anthracyclines carminomycin and daunorubicin (daunomycin) which are aromatic polyketide antibiotics that exhibit high cytotoxicity and are widely applied in the chemotherapy of a variety of cancers. In vivo, DoxA catalyzes the C-13 hydroxylation of 13-deoxycarminomycin and 13-deoxydaunorubicin to yield 13-dihydrocarminomycin and 13-dihydrodaunorubicin, respectively, as well as the oxidation of these 13-dihydro-anthracyclines to their respective 13-keto forms, carminomycin and daunorubicin. In vitro, it also catalyzes the C-14 hydroxylation of daunorubicin to form doxorubicin (adriamycin), although this strain is not a doxorubicin producer. It is not able to accept anthracyclinones (aglycones) and anthracyclines with a 10-carbomethoxyl moiety. 13-oxidation of the anthracyclines possessing the 4-methoxy substitution is greatly favored. The anthracycline analog desacetyladriamycin can be oxidized to 10-hydroxydesacetyladriamycin. It can only use NADP. DoxA acts jointly with DauV. The sequence is that of Cytochrome P-450 monooxygenase DoxA (doxA) from Streptomyces sp. (strain C5).